The following is a 222-amino-acid chain: UPF0488 protein C8orf33 homolog (222 aa).

The segment covering 1–16 (MAEPGRPAREAPAASS) has biased composition (low complexity). Disordered stretches follow at residues 1–103 (MAEP…AEQL), 119–146 (KTQR…TPLP), and 186–210 (VSEA…KTTP). Residue Ala2 is modified to N-acetylalanine. Residues 17-28 (RKTHRAPRRPRP) show a composition bias toward basic residues. At Arg27 the chain carries Omega-N-methylarginine. The span at 29 to 39 (SRSASGASEPP) shows a compositional bias: low complexity. Ser75 is subject to Phosphoserine. Low complexity predominate over residues 93–103 (PPSAEAQAEQL).

Belongs to the UPF0488 family.

This chain is UPF0488 protein C8orf33 homolog, found in Mus musculus (Mouse).